A 163-amino-acid chain; its full sequence is NADH-quinone oxidoreductase subunit I (163 aa).

2 consecutive 4Fe-4S ferredoxin-type domains span residues 53 to 83 (LRRYPNGEERCIACKLCEAICPALAITIEAG) and 94 to 123 (TRYDIDMTKCIYCGLCQEACPVDAIVEGPN). [4Fe-4S] cluster contacts are provided by Cys63, Cys66, Cys69, Cys73, Cys103, Cys106, Cys109, and Cys113.

This sequence belongs to the complex I 23 kDa subunit family. In terms of assembly, NDH-1 is composed of 14 different subunits. Subunits NuoA, H, J, K, L, M, N constitute the membrane sector of the complex. [4Fe-4S] cluster is required as a cofactor.

The protein resides in the cell inner membrane. It catalyses the reaction a quinone + NADH + 5 H(+)(in) = a quinol + NAD(+) + 4 H(+)(out). Its function is as follows. NDH-1 shuttles electrons from NADH, via FMN and iron-sulfur (Fe-S) centers, to quinones in the respiratory chain. The immediate electron acceptor for the enzyme in this species is believed to be ubiquinone. Couples the redox reaction to proton translocation (for every two electrons transferred, four hydrogen ions are translocated across the cytoplasmic membrane), and thus conserves the redox energy in a proton gradient. In Parvibaculum lavamentivorans (strain DS-1 / DSM 13023 / NCIMB 13966), this protein is NADH-quinone oxidoreductase subunit I.